Reading from the N-terminus, the 120-residue chain is Large ribosomal subunit protein bL19 (120 aa).

The protein belongs to the bacterial ribosomal protein bL19 family.

This protein is located at the 30S-50S ribosomal subunit interface and may play a role in the structure and function of the aminoacyl-tRNA binding site. The protein is Large ribosomal subunit protein bL19 of Crocosphaera subtropica (strain ATCC 51142 / BH68) (Cyanothece sp. (strain ATCC 51142)).